Consider the following 447-residue polypeptide: Glutamate--tRNA ligase 1 (447 aa).

The short motif at 10–20 is the 'HIGH' region element; that stretch reads PSPTGMLHVGN. The 'KMSKS' region motif lies at 240–244; the sequence is KISKR. Position 243 (Lys-243) interacts with ATP.

Belongs to the class-I aminoacyl-tRNA synthetase family. Glutamate--tRNA ligase type 1 subfamily. As to quaternary structure, monomer.

Its subcellular location is the cytoplasm. It catalyses the reaction tRNA(Glu) + L-glutamate + ATP = L-glutamyl-tRNA(Glu) + AMP + diphosphate. Its function is as follows. Catalyzes the attachment of glutamate to tRNA(Glu) in a two-step reaction: glutamate is first activated by ATP to form Glu-AMP and then transferred to the acceptor end of tRNA(Glu). The polypeptide is Glutamate--tRNA ligase 1 (Rickettsia felis (strain ATCC VR-1525 / URRWXCal2) (Rickettsia azadi)).